The sequence spans 316 residues: Palmitoyltransferase ZDHHC3-A (316 aa).

Residues 1–45 are Cytoplasmic-facing; sequence MRSPVPRFRDVERQASGLQPPQCLPSCHERQSSMWFIKDACGIVC. A helical membrane pass occupies residues 46–66; sequence AIITWFLVFFAEFVVLFVMLI. At 67–70 the chain is on the lumenal side; it reads PSKN. A helical transmembrane segment spans residues 71-91; it reads LTYSLVNGTLFNSLAFLALAS. Over 92–169 the chain is Cytoplasmic; the sequence is HFRAMCTDPG…NCVGENNQKY (78 aa). The DHHC domain occupies 124 to 175; it reads VYKCPKCCSIKPDRAHHCSVCKRCIRKMDHHCPWVNNCVGENNQKYFVLFTM. The S-palmitoyl cysteine moiety is linked to residue Cys144. Catalysis depends on Cys155, which acts as the S-palmitoyl cysteine intermediate. The chain crosses the membrane as a helical span at residues 170-190; sequence FVLFTMYICLISLHSLVMVVF. Residues 191–212 lie on the Lumenal side of the membrane; sequence HFLNCFEDDWTKCSTFSPPATV. The chain crosses the membrane as a helical span at residues 213-233; the sequence is ILLILLCFEGLLFLIFTSVMF. At 234–316 the chain is on the cytoplasmic side; that stretch reads GTQVHSICTD…DVIEIPLEPH (83 aa).

It belongs to the DHHC palmitoyltransferase family. As to quaternary structure, monomer. Homooligomers. The monomeric form has a higher catalytic activity. Forms heterooligomers with zdhhc7. Post-translationally, autopalmitoylated.

Its subcellular location is the golgi apparatus membrane. It carries out the reaction L-cysteinyl-[protein] + hexadecanoyl-CoA = S-hexadecanoyl-L-cysteinyl-[protein] + CoA. The catalysed reaction is L-cysteinyl-[protein] + tetradecanoyl-CoA = S-tetradecanoyl-L-cysteinyl-[protein] + CoA. The enzyme catalyses L-cysteinyl-[protein] + octadecanoyl-CoA = S-octadecanoyl-L-cysteinyl-[protein] + CoA. Its function is as follows. Golgi-localized palmitoyltransferase that catalyzes the addition of palmitate onto various protein substrates and regulates their association with membranes. Has no stringent fatty acid selectivity and in addition to palmitate can also transfer onto target proteins myristate from tetradecanoyl-CoA and stearate from octadecanoyl-CoA. In Danio rerio (Zebrafish), this protein is Palmitoyltransferase ZDHHC3-A (zdhhc3a).